Here is a 213-residue protein sequence, read N- to C-terminus: Peptidyl-tRNA hydrolase (213 aa).

Tyr15 contributes to the tRNA binding site. Residue His20 is the Proton acceptor of the active site. Positions 66, 68, and 114 each coordinate tRNA. The tract at residues 187 to 213 is disordered; that stretch reads HTTKPPRPKPPRPAAAPVDAPAAPGDQ. A compositionally biased stretch (low complexity) spans 201 to 213; the sequence is AAPVDAPAAPGDQ.

This sequence belongs to the PTH family. In terms of assembly, monomer.

It localises to the cytoplasm. The catalysed reaction is an N-acyl-L-alpha-aminoacyl-tRNA + H2O = an N-acyl-L-amino acid + a tRNA + H(+). Hydrolyzes ribosome-free peptidyl-tRNAs (with 1 or more amino acids incorporated), which drop off the ribosome during protein synthesis, or as a result of ribosome stalling. In terms of biological role, catalyzes the release of premature peptidyl moieties from peptidyl-tRNA molecules trapped in stalled 50S ribosomal subunits, and thus maintains levels of free tRNAs and 50S ribosomes. The sequence is that of Peptidyl-tRNA hydrolase from Paracidovorax citrulli (strain AAC00-1) (Acidovorax citrulli).